The primary structure comprises 148 residues: Cytochrome c oxidase subunit 4, mitochondrial (148 aa).

Residues 1–24 (MFALRSIRSATKAFQTTSIVSQRG) constitute a mitochondrion transit peptide.

In terms of assembly, slime mold cytochrome c oxidase consists of at least seven different polypeptides species, subunits I, II, III, IV, V, VI, and VIIe/s in order of MW.

It is found in the mitochondrion inner membrane. It carries out the reaction 4 Fe(II)-[cytochrome c] + O2 + 8 H(+)(in) = 4 Fe(III)-[cytochrome c] + 2 H2O + 4 H(+)(out). Its function is as follows. This protein is one of the nuclear-coded polypeptide chains of cytochrome c oxidase, the terminal oxidase in mitochondrial electron transport. In Dictyostelium discoideum (Social amoeba), this protein is Cytochrome c oxidase subunit 4, mitochondrial (cxdA).